The sequence spans 178 residues: Gamma-crystallin S (178 aa).

An N-acetylserine modification is found at Ser2. Positions 2–5 are N-terminal arm; it reads SKSG. Beta/gamma crystallin 'Greek key' domains are found at residues 6 to 44 and 45 to 87; these read TKIT…RVEG and GTWA…RAVH. Residues 88 to 93 are connecting peptide; the sequence is LSSGGQ. 2 consecutive Beta/gamma crystallin 'Greek key' domains span residues 94-134 and 135-177; these read YKIQ…KVLD and GVWI…RRIV.

This sequence belongs to the beta/gamma-crystallin family. As to quaternary structure, monomer.

Functionally, crystallins are the dominant structural components of the vertebrate eye lens. In Canis lupus familiaris (Dog), this protein is Gamma-crystallin S (CRYGS).